Consider the following 247-residue polypeptide: MNVLSCSINTLKGLYDISGVEVGQHFYWQIGGFQVHAQVLITSWVVIAILLGSATLAVRNPQTIPTDGQNFFEYVLEFIRDVSKTQIGEEYGSWVPFIGTMFLFIFVSNWSGALLPWKIIQLPHGELAAPTNDINTTVALALLTSVAYFYAGLTKKGLGYFGKYIQPTPILLPINILEDFTKPLSLSFRLFGNILADELVVVVLVSLVPSIVPIPVMFLGLFTSGIQALIFATLAAAYIGESMEGHH.

5 consecutive transmembrane segments (helical) span residues 38–58 (QVLI…TLAV), 95–115 (VPFI…GALL), 134–154 (INTT…AGLT), 199–219 (LVVV…VMFL), and 220–240 (GLFT…AYIG).

Belongs to the ATPase A chain family. F-type ATPases have 2 components, CF(1) - the catalytic core - and CF(0) - the membrane proton channel. CF(1) has five subunits: alpha(3), beta(3), gamma(1), delta(1), epsilon(1). CF(0) has four main subunits: a, b, b' and c.

Its subcellular location is the plastid. The protein localises to the chloroplast thylakoid membrane. Key component of the proton channel; it plays a direct role in the translocation of protons across the membrane. This chain is ATP synthase subunit a, chloroplastic, found in Vitis vinifera (Grape).